Here is a 166-residue protein sequence, read N- to C-terminus: Small ribosomal subunit protein uS9 (166 aa).

The disordered stretch occupies residues 135 to 166 (KKAGFLTRDPRATERKKYGLKKARKAPQYSKR). Residues 142 to 151 (RDPRATERKK) show a composition bias toward basic and acidic residues. The span at 152 to 166 (YGLKKARKAPQYSKR) shows a compositional bias: basic residues.

It belongs to the universal ribosomal protein uS9 family.

In Mycobacterium avium (strain 104), this protein is Small ribosomal subunit protein uS9.